The sequence spans 438 residues: MSVTKVHARTVYDSRGNPTVEVEVYTKDGMFRAIVPSGASTGSHEALELRDGDKSKWEGKGVTKAVSNVNDIIGPKLIESKLDVKDQKAIDEFMIKLDGTKNKSKLGANAILGVSLAVARAGAAAKGVPLYQHIAELADMKKEPYVIPCPFFNVLNGGVHAGGNLALQEFLIAPVGAESFHEALRLGSEVYHKLKALAKKRIGSSAGNVGDEGGIAPSLSTPFEALDLIYDAIKEAGHEGKVKIAMDPASSEFFQGDKYDLDFKNPHPDAKNKLSGAQLGDYYKTILEKYPIVSLEDPFAEDDWEAWTNFFPKAGVQIIADDLTVTNPERIQTAIDKKTADCLLLKVNQIGSLTESINSAKLAYGAGWGVQVSHRSGETEDTFIADLVVGLRTGQIKSGSLARSERLAKWNQILRIEEELGASNTIFAGAKFHKGQLL.

Residues H160 and E169 each coordinate substrate. Catalysis depends on E212, which acts as the Proton donor. The Mg(2+) site is built by D247, E296, and D321. Substrate is bound by residues E296 and D321. K346 functions as the Proton acceptor in the catalytic mechanism. Substrate contacts are provided by residues S373 to S376 and K397.

The protein belongs to the enolase family. Homodimer. It depends on Mg(2+) as a cofactor.

Its subcellular location is the cytoplasm. The enzyme catalyses (2R)-2-phosphoglycerate = phosphoenolpyruvate + H2O. It participates in carbohydrate degradation; glycolysis; pyruvate from D-glyceraldehyde 3-phosphate: step 4/5. The chain is Enolase 1 (ENO1) from Candida glabrata (strain ATCC 2001 / BCRC 20586 / JCM 3761 / NBRC 0622 / NRRL Y-65 / CBS 138) (Yeast).